The following is a 204-amino-acid chain: Guanylate kinase (204 aa).

The region spanning 3–181 is the Guanylate kinase-like domain; it reads GTLYIVSASS…AVSEMSAIFT (179 aa). 10–17 contributes to the ATP binding site; sequence ASSGTGKS.

It belongs to the guanylate kinase family.

Its subcellular location is the cytoplasm. The enzyme catalyses GMP + ATP = GDP + ADP. In terms of biological role, essential for recycling GMP and indirectly, cGMP. This chain is Guanylate kinase, found in Xylella fastidiosa (strain Temecula1 / ATCC 700964).